Reading from the N-terminus, the 378-residue chain is Putative glutamate--cysteine ligase 2-1 (378 aa).

This sequence belongs to the glutamate--cysteine ligase type 2 family. YbdK subfamily.

The catalysed reaction is L-cysteine + L-glutamate + ATP = gamma-L-glutamyl-L-cysteine + ADP + phosphate + H(+). ATP-dependent carboxylate-amine ligase which exhibits weak glutamate--cysteine ligase activity. The protein is Putative glutamate--cysteine ligase 2-1 of Corynebacterium efficiens (strain DSM 44549 / YS-314 / AJ 12310 / JCM 11189 / NBRC 100395).